The sequence spans 438 residues: MTTMATAAPVRASQAWYKILYVQVLIAILIGAMVGCLWPSVATNDWVKALGDGFIKLIKMVIAPIIFCTVTSGIAHIQDAKKVGCVGVKALFYFEIVSSFALLLGLAMGNLVRIGHGLAVKPDAAAVANYVKQAEASKTVDFILNIIPDSVVGAFARGDVLQVLLFAILFGFSLMALGKRGERLRGMIDDVAHAVFGVIAIVMKAAPIGAFGAMAFTVGKFGPAALGNLIGLIALFYVTAALFVVVVLGLIARLVGFSIFKFLIYIKDELLIVLGTSSSESALPQLMEKLERLGCSKPVVGLVVPTGYSFNLDGTNIYMTLATLFIAQALGVDLSFGQQLTILLVAMLTSKGASGVTGAGFITLAATLSVVNPALVPGMAIVFSIDKFMSEVRALTNIIGNGIAAVFVSWWESELDHVTLQTRLNKSTASTTIDTTST.

8 consecutive transmembrane segments (helical) span residues 20 to 42 (LYVQ…PSVA), 57 to 77 (LIKM…IAHI), 90 to 112 (ALFY…GNLV), 160 to 179 (VLQV…ALGK), 192 to 214 (AHAV…FGAM), 229 to 251 (LIGL…LGLI), 324 to 346 (LFIA…LLVA), and 361 to 383 (FITL…AIVF).

Belongs to the dicarboxylate/amino acid:cation symporter (DAACS) (TC 2.A.23) family.

Its subcellular location is the cell inner membrane. In terms of biological role, responsible for the transport of dicarboxylates such as succinate, fumarate, and malate from the periplasm across the membrane. This is C4-dicarboxylate transport protein 1 from Bradyrhizobium diazoefficiens (strain JCM 10833 / BCRC 13528 / IAM 13628 / NBRC 14792 / USDA 110).